A 146-amino-acid polypeptide reads, in one-letter code: Large ribosomal subunit protein uL15 (146 aa).

The disordered stretch occupies residues 1–65 (MSDIQLNTLK…GQMPLQRRLP (65 aa)). Residues 24 to 34 (RGIGSGLGKTA) are compositionally biased toward gly residues.

The protein belongs to the universal ribosomal protein uL15 family. Part of the 50S ribosomal subunit.

Functionally, binds to the 23S rRNA. This Bordetella petrii (strain ATCC BAA-461 / DSM 12804 / CCUG 43448) protein is Large ribosomal subunit protein uL15.